We begin with the raw amino-acid sequence, 428 residues long: MATAFAPTKLTATVPLHGSHENRLLLPIRLAPPSSFLGSTRSLSLRRLNHSNATRRSPVVSVQEVVKEKQSTNNTSLLITKEEGLELYEDMILGRSFEDMCAQMYYRGKMFGFVHLYNGQEAVSTGFIKLLTKSDSVVSTYRDHVHALSKGVSARAVMSELFGKVTGCCRGQGGSMHMFSKEHNMLGGFAFIGEGIPVATGAAFSSKYRREVLKQDCDDVTVAFFGDGTCNNGQFFECLNMAALYKLPIIFVVENNLWAIGMSHLRATSDPEIWKKGPAFGMPGVHVDGMDVLKVREVAKEAVTRARRGEGPTLVECETYRFRGHSLADPDELRDAAEKAKYAARDPIAALKKYLIENKLAKEAELKSIEKKIDELVEEAVEFADASPQPGRSQLLENVFADPKGFGIGPDGRYRCEDPKFTEGTAQV.

A chloroplast-targeting transit peptide spans methionine 1–serine 61. Positions 115, 141, 142, 190, 192, 227, 228, and 256 each coordinate pyruvate. Residues tyrosine 141, arginine 142, alanine 190, isoleucine 192, aspartate 227, glycine 228, asparagine 256, and histidine 325 each coordinate thiamine diphosphate. Aspartate 227 serves as a coordination point for Mg(2+). Residue asparagine 256 participates in Mg(2+) binding.

Tetramer of 2 alpha and 2 beta subunits. Requires thiamine diphosphate as cofactor. The cofactor is Mg(2+).

Its subcellular location is the plastid. It localises to the chloroplast. It catalyses the reaction N(6)-[(R)-lipoyl]-L-lysyl-[protein] + pyruvate + H(+) = N(6)-[(R)-S(8)-acetyldihydrolipoyl]-L-lysyl-[protein] + CO2. Its function is as follows. The pyruvate dehydrogenase complex catalyzes the overall conversion of pyruvate to acetyl-CoA and CO(2). It contains multiple copies of three enzymatic components: pyruvate dehydrogenase (E1), dihydrolipoamide acetyltransferase (E2) and lipoamide dehydrogenase (E3). The sequence is that of Pyruvate dehydrogenase E1 component subunit alpha-3, chloroplastic (PDH-E1 ALPHA) from Arabidopsis thaliana (Mouse-ear cress).